The sequence spans 210 residues: Guanylate kinase (210 aa).

The region spanning 6–186 is the Guanylate kinase-like domain; it reads GLLGIISAPS…ALIYLQSVIL (181 aa). 13–20 is an ATP binding site; sequence APSGAGKS.

Belongs to the guanylate kinase family.

It localises to the cytoplasm. It catalyses the reaction GMP + ATP = GDP + ADP. In terms of biological role, essential for recycling GMP and indirectly, cGMP. In Blochmanniella floridana, this protein is Guanylate kinase.